A 192-amino-acid chain; its full sequence is Transposon Tn552 DNA-invertase BinR (192 aa).

The Resolvase/invertase-type recombinase catalytic domain occupies 1-136 (MKIGYARVST…AGRIAARARG (136 aa)). Ser-9 serves as the catalytic O-(5'-phospho-DNA)-serine intermediate. Positions 163–182 (IKTIAEQWKVSRTTIYRYLN) form a DNA-binding region, H-T-H motif.

The protein belongs to the site-specific recombinase resolvase family.

In terms of biological role, DNA-invertase, mediating the inversion of inv. This Staphylococcus aureus protein is Transposon Tn552 DNA-invertase BinR (resR).